The sequence spans 266 residues: Glucosamine-6-phosphate deaminase (266 aa).

D72 (proton acceptor; for enolization step) is an active-site residue. The active-site For ring-opening step is D141. The active-site Proton acceptor; for ring-opening step is the H143. E148 acts as the For ring-opening step in catalysis.

This sequence belongs to the glucosamine/galactosamine-6-phosphate isomerase family. NagB subfamily. As to quaternary structure, homohexamer.

It catalyses the reaction alpha-D-glucosamine 6-phosphate + H2O = beta-D-fructose 6-phosphate + NH4(+). Its pathway is amino-sugar metabolism; N-acetylneuraminate degradation; D-fructose 6-phosphate from N-acetylneuraminate: step 5/5. With respect to regulation, allosterically activated by N-acetylglucosamine 6-phosphate (GlcNAc6P). In terms of biological role, catalyzes the reversible isomerization-deamination of glucosamine 6-phosphate (GlcN6P) to form fructose 6-phosphate (Fru6P) and ammonium ion. The protein is Glucosamine-6-phosphate deaminase of Klebsiella pneumoniae (strain 342).